We begin with the raw amino-acid sequence, 51 residues long: Insulin (51 aa).

3 disulfides stabilise this stretch: cysteine 7–cysteine 37, cysteine 19–cysteine 50, and cysteine 36–cysteine 41.

The protein belongs to the insulin family. As to quaternary structure, heterodimer of a B chain and an A chain linked by two disulfide bonds.

It is found in the secreted. Functionally, insulin decreases blood glucose concentration. It increases cell permeability to monosaccharides, amino acids and fatty acids. It accelerates glycolysis, the pentose phosphate cycle, and glycogen synthesis in liver. The protein is Insulin (INS) of Camelus dromedarius (Dromedary).